The sequence spans 322 residues: Transmembrane protein 171 (322 aa).

4 helical membrane-spanning segments follow: residues 22–42 (IFFLFVFGAALLCVGVLLSIF), 57–77 (IVLKIAGPSCAVVGLGAVILA), 112–132 (LIFGFLFLTSGMLISILGIWV), and 159–179 (FLSLQIMGPLVVLVGLCFFVV). The interval 223-322 (PPPYFPESSA…LGAPSDASPP (100 aa)) is disordered. Residues 228–241 (PESSAAAPSPGANS) show a composition bias toward low complexity. Polar residues-rich tracts occupy residues 242 to 267 (LHQIENPPSYSSLFNYGTPTPENQGA) and 279 to 289 (ISGQGSSSERS).

It localises to the membrane. The polypeptide is Transmembrane protein 171 (Tmem171) (Mus musculus (Mouse)).